The chain runs to 121 residues: Snaclec coagulation factor IX-binding protein subunit A (121 aa).

The C-type lectin domain maps to 1–120 (YEGHCYQTFK…CGERNPFVCE (120 aa)). Intrachain disulfides connect C22–C119 and C94–C111. The Ca(2+) site is built by S33, E35, and E39. E120 contacts Ca(2+).

It belongs to the snaclec family. As to quaternary structure, heterodimer of subunits A and B; disulfide-linked. As to expression, expressed by the venom gland.

It is found in the secreted. Its function is as follows. Anticoagulant protein which binds to the gamma-carboxyglutamic acid-domain regions of factor IX (F9) (but not factor X) in the presence of calcium with a 1 to 1 stoichiometry. The polypeptide is Snaclec coagulation factor IX-binding protein subunit A (Gloydius halys (Chinese water mocassin)).